The following is a 118-amino-acid chain: Large ribosomal subunit protein uL18 (118 aa).

Belongs to the universal ribosomal protein uL18 family. Part of the 50S ribosomal subunit; part of the 5S rRNA/L5/L18/L25 subcomplex. Contacts the 5S and 23S rRNAs.

This is one of the proteins that bind and probably mediate the attachment of the 5S RNA into the large ribosomal subunit, where it forms part of the central protuberance. The polypeptide is Large ribosomal subunit protein uL18 (Rickettsia akari (strain Hartford)).